We begin with the raw amino-acid sequence, 453 residues long: Insulinoma-associated protein 1b (453 aa).

The tract at residues 1–20 is SNAG domain; that stretch reads MPKGFLVKRNKKAALVSYRI. Residues 140–179 are disordered; it reads NSNRSGTASGAHAPAIQTGAKRPSADAAERKVSSKSAKKP. Positions 162 to 171 are enriched in basic and acidic residues; it reads PSADAAERKV. A C2H2-type 1 zinc finger spans residues 252–274; sequence YRCPECEKVFSCPANLASHRRWH. Residues 298–318 are disordered; it reads AEFPSDRDTPSPGLSESGSED. C2H2-type zinc fingers lie at residues 321–343, 383–406, and 412–435; these read YDCQHCGKRFKRQAYLRKHILGH, LTCPACGEKLPNRASLERHLRLLH, and FPCKFCPATFYSSPGLTRHINKCH.

This sequence belongs to the INSM1 family.

Its subcellular location is the nucleus. Functionally, may act as a transcriptional regulator. May play a role in neurogenesis and neuroendocrine cell differentiation during embryonic development. This Danio rerio (Zebrafish) protein is Insulinoma-associated protein 1b (insm1b).